Here is a 330-residue protein sequence, read N- to C-terminus: Type II methyltransferase M.HaeIII (330 aa).

One can recognise an SAM-dependent MTase C5-type domain in the interval 1-327 (MNLISLFSGA…KTIKSALEIC (327 aa)). ATP is bound by residues glutamate 29 and 50 to 51 (DI). The active site involves cysteine 71. Residue asparagine 260 participates in ATP binding.

It belongs to the class I-like SAM-binding methyltransferase superfamily. C5-methyltransferase family. As to quaternary structure, monomer.

It catalyses the reaction a 2'-deoxycytidine in DNA + S-adenosyl-L-methionine = a 5-methyl-2'-deoxycytidine in DNA + S-adenosyl-L-homocysteine + H(+). A methylase, recognizes the double-stranded sequence 5'-GGCC-3', methylates C-3 on both strands, and protects the DNA from cleavage by the HaeIII endonuclease. This chain is Type II methyltransferase M.HaeIII (haeIIIM), found in Haemophilus aegyptius.